Consider the following 356-residue polypeptide: GDSL esterase/lipase At2g36325 (356 aa).

Residues 1-26 (MNITKLTPWFLFSCLILLSDYIKVNS) form the signal peptide. N25 carries an N-linked (GlcNAc...) asparagine glycan. The Nucleophile role is filled by S54. 3 N-linked (GlcNAc...) asparagine glycosylation sites follow: N165, N185, and N240. Catalysis depends on residues D334 and H337.

This sequence belongs to the 'GDSL' lipolytic enzyme family.

The protein localises to the secreted. This is GDSL esterase/lipase At2g36325 from Arabidopsis thaliana (Mouse-ear cress).